A 65-amino-acid polypeptide reads, in one-letter code: Small ribosomal subunit protein bS21 (65 aa).

The protein belongs to the bacterial ribosomal protein bS21 family.

The sequence is that of Small ribosomal subunit protein bS21 from Geobacter sp. (strain M21).